A 23-amino-acid chain; its full sequence is Hemocyanin subunit 4 (23 aa).

It belongs to the tyrosinase family. Hemocyanin subfamily. Hemolymph.

The protein resides in the secreted. Its subcellular location is the extracellular space. In terms of biological role, hemocyanins are copper-containing oxygen carriers occurring freely dissolved in the hemolymph of many mollusks and arthropods. This Carcinus maenas (Common shore crab) protein is Hemocyanin subunit 4.